The chain runs to 583 residues: ATP-dependent lipid A-core flippase (583 aa).

6 helical membrane passes run 32–52, 71–91, 115–135, 160–180, 259–279, and 286–306; these read VAFLISIIALVTFSATNTGFL, LHLLPFMLFGLLAIRALAGFI, LMSLPVSFFDAVSAGVVTSKL, ILGMVGYMLYLDWQLTLIFAV, SMVVELLAGVALALVVFYAVG, and FAAFIGALLMLIGPVKTLTSL. The ABC transmembrane type-1 domain maps to 34-312; sequence FLISIIALVT…LTSLNEELQV (279 aa). The region spanning 344–580 is the ABC transporter domain; the sequence is IVFENVTLQY…DGHYAKLYRK (237 aa). 378 to 385 lines the ATP pocket; the sequence is GRSGGGKT.

It belongs to the ABC transporter superfamily. Lipid exporter (TC 3.A.1.106) family. In terms of assembly, homodimer.

The protein localises to the cell inner membrane. It carries out the reaction ATP + H2O + lipid A-core oligosaccharideSide 1 = ADP + phosphate + lipid A-core oligosaccharideSide 2.. Functionally, involved in lipopolysaccharide (LPS) biosynthesis. Translocates lipid A-core from the inner to the outer leaflet of the inner membrane. Transmembrane domains (TMD) form a pore in the inner membrane and the ATP-binding domain (NBD) is responsible for energy generation. The chain is ATP-dependent lipid A-core flippase from Methylobacillus flagellatus (strain ATCC 51484 / DSM 6875 / VKM B-1610 / KT).